Reading from the N-terminus, the 585-residue chain is Membrane protein insertase YidC (585 aa).

A run of 6 helical transmembrane segments spans residues 5 to 25 (SVTGLALIALIMIVWLQFMSP), 338 to 358 (FGWDWLTRPFAEFVILPAFTW), 362 to 382 (FVSNYGLIIIIFAFLIKLVTY), 432 to 452 (LGGCLPVVLQMPLLFAMFYVF), 482 to 502 (IPMYGSHIALLPILMAVTVFL), and 518 to 538 (IMLYMFPAMMLLFFNNMPSGL).

This sequence belongs to the OXA1/ALB3/YidC family. Type 1 subfamily. In terms of assembly, interacts with the Sec translocase complex via SecD. Specifically interacts with transmembrane segments of nascent integral membrane proteins during membrane integration.

The protein resides in the cell inner membrane. In terms of biological role, required for the insertion and/or proper folding and/or complex formation of integral membrane proteins into the membrane. Involved in integration of membrane proteins that insert both dependently and independently of the Sec translocase complex, as well as at least some lipoproteins. Aids folding of multispanning membrane proteins. The sequence is that of Membrane protein insertase YidC from Chlorobium luteolum (strain DSM 273 / BCRC 81028 / 2530) (Pelodictyon luteolum).